Here is a 238-residue protein sequence, read N- to C-terminus: RAD9, HUS1, RAD1-interacting nuclear orphan protein 1 (238 aa).

A compositionally biased stretch (basic residues) spans M1 to P10. A disordered region spans residues M1–A31. S51 carries the phosphoserine; by PLK1 modification. The RAD1-binding motif motif lies at S55–F61. The disordered stretch occupies residues K74–E105. Over residues H75–R84 the composition is skewed to basic residues. Residues R125 to L132 carry the D-box motif. The short motif at Q174 to S178 is the KEN box element.

In terms of assembly, interacts (when phosphorylated by PLK1) with POLQ; promoting POLQ recruitment to DNA damage sites. Interacts with RAD1; interaction is direct and promotes association with the 9-1-1 (RAD9-RAD1-HUS1) complex. Interacts with RAD18. Interacts with TOPBP1. Interacts with UBE2N. Post-translationally, phosphorylated at Ser-51 by PLK1, promoting interaction with polymerase theta (POLQ). Ubiquitinated and degraded by the APC/C complex upon mitotic exit. In terms of tissue distribution, weakly expressed in testis, prostate, ovary, thymus and small intestine. Expressed strongly in breast cancer cells.

Its subcellular location is the nucleus. The protein localises to the chromosome. In terms of biological role, involved in microhomology-mediated end-joining (MMEJ) DNA repair by promoting recruitment of polymerase theta (POLQ) to DNA damage sites during mitosis. MMEJ is an alternative non-homologous end-joining (NHEJ) machinery that takes place during mitosis to repair double-strand breaks in DNA that originate in S-phase. Accumulates in M-phase; following phosphorylation by PLK1, interacts with POLQ, enabling its recruitment to double-strand breaks for subsequent repair. Also involved in the DNA damage response (DDR) signaling in response to genotoxic stresses such as ionizing radiation (IR) during the S phase. Recruited to sites of DNA damage through interaction with the 9-1-1 cell-cycle checkpoint response complex and TOPBP1 in a ATR-dependent manner. Required for the progression of the G1 to S phase transition. Plays a role in the stimulation of CHEK1 phosphorylation. The polypeptide is RAD9, HUS1, RAD1-interacting nuclear orphan protein 1 (Homo sapiens (Human)).